Reading from the N-terminus, the 355-residue chain is DNA polymerase IV (355 aa).

Positions 7 to 188 (IIHIDMDCFY…LPLSKIPGVG (182 aa)) constitute a UmuC domain. 2 residues coordinate Mg(2+): Asp-11 and Asp-106. Glu-107 is a catalytic residue.

The protein belongs to the DNA polymerase type-Y family. Monomer. It depends on Mg(2+) as a cofactor.

It is found in the cytoplasm. The catalysed reaction is DNA(n) + a 2'-deoxyribonucleoside 5'-triphosphate = DNA(n+1) + diphosphate. Poorly processive, error-prone DNA polymerase involved in untargeted mutagenesis. Copies undamaged DNA at stalled replication forks, which arise in vivo from mismatched or misaligned primer ends. These misaligned primers can be extended by PolIV. Exhibits no 3'-5' exonuclease (proofreading) activity. May be involved in translesional synthesis, in conjunction with the beta clamp from PolIII. This chain is DNA polymerase IV, found in Mannheimia succiniciproducens (strain KCTC 0769BP / MBEL55E).